Here is a 647-residue protein sequence, read N- to C-terminus: Protein FAM161B (647 aa).

Disordered stretches follow at residues 1–39 (MTVG…GDGL), 89–110 (SDPE…FFQD), and 135–167 (LNNL…SWAS). A compositionally biased stretch (acidic residues) spans 91–105 (PESDENLSEDEEDLE). Positions 262 to 292 (LEKEEQLKEAARQRDLAATAEAKISKQKATR) form a coiled coil. Residues 332–350 (PIASSSNRANPQPRTATRT) are compositionally biased toward polar residues. 2 disordered regions span residues 332-352 (PIAS…RTQQ) and 388-439 (KRRE…RSRS). The stretch at 510–546 (LEEVFKAKLKENRNNDRKRAKEYKKELEEMKQRIQTR) forms a coiled coil. The disordered stretch occupies residues 583 to 647 (KGQGTRAVQE…QSPENLVSLA (65 aa)). Residues 590–602 (VQEKETKIKDFPR) show a composition bias toward basic and acidic residues. Positions 637–647 (HQSPENLVSLA) are enriched in polar residues.

Belongs to the FAM161 family. Interacts with FAM161A. As to expression, ubiquitously expressed.

The polypeptide is Protein FAM161B (FAM161B) (Homo sapiens (Human)).